A 294-amino-acid polypeptide reads, in one-letter code: UDP-3-O-acyl-N-acetylglucosamine deacetylase (294 aa).

Positions 75, 232, and 236 each coordinate Zn(2+). Catalysis depends on H259, which acts as the Proton donor.

The protein belongs to the LpxC family. Requires Zn(2+) as cofactor.

It carries out the reaction a UDP-3-O-[(3R)-3-hydroxyacyl]-N-acetyl-alpha-D-glucosamine + H2O = a UDP-3-O-[(3R)-3-hydroxyacyl]-alpha-D-glucosamine + acetate. It functions in the pathway glycolipid biosynthesis; lipid IV(A) biosynthesis; lipid IV(A) from (3R)-3-hydroxytetradecanoyl-[acyl-carrier-protein] and UDP-N-acetyl-alpha-D-glucosamine: step 2/6. In terms of biological role, catalyzes the hydrolysis of UDP-3-O-myristoyl-N-acetylglucosamine to form UDP-3-O-myristoylglucosamine and acetate, the committed step in lipid A biosynthesis. The sequence is that of UDP-3-O-acyl-N-acetylglucosamine deacetylase from Campylobacter jejuni (strain RM1221).